The sequence spans 252 residues: MDVKSVLSNAFAMPITSPAFPMGPYRFINREFLIITYRTDPDKLRAVVPEPLEIGEPLVHYEFIRMPDSTGFGDYTESGQVIPVSYKGVAGGYTLAMYLDDHPPIAGGRELWGFPKKLANPVLAVHTDTLVGTLDYGPVRIATGTMGYKHRQLDLAQQKKRLETPNFLLKVIPHVDGTPRICELVRYYLQDIDLKGAWTGPAALELAHHALAPVAELPVLEIVEARHLLADLTLGLGEVVFDYLDQPEANAR.

Catalysis depends on lysine 116, which acts as the Schiff-base intermediate with acetoacetate.

The protein belongs to the ADC family.

The catalysed reaction is acetoacetate + H(+) = acetone + CO2. In terms of biological role, catalyzes the conversion of acetoacetate to acetone and carbon dioxide. The protein is Acetoacetate decarboxylase of Paraburkholderia phytofirmans (strain DSM 17436 / LMG 22146 / PsJN) (Burkholderia phytofirmans).